We begin with the raw amino-acid sequence, 255 residues long: Leucyl/phenylalanyl-tRNA--protein transferase (255 aa).

This sequence belongs to the L/F-transferase family.

The protein resides in the cytoplasm. The catalysed reaction is N-terminal L-lysyl-[protein] + L-leucyl-tRNA(Leu) = N-terminal L-leucyl-L-lysyl-[protein] + tRNA(Leu) + H(+). It carries out the reaction N-terminal L-arginyl-[protein] + L-leucyl-tRNA(Leu) = N-terminal L-leucyl-L-arginyl-[protein] + tRNA(Leu) + H(+). It catalyses the reaction L-phenylalanyl-tRNA(Phe) + an N-terminal L-alpha-aminoacyl-[protein] = an N-terminal L-phenylalanyl-L-alpha-aminoacyl-[protein] + tRNA(Phe). Functionally, functions in the N-end rule pathway of protein degradation where it conjugates Leu, Phe and, less efficiently, Met from aminoacyl-tRNAs to the N-termini of proteins containing an N-terminal arginine or lysine. In Burkholderia pseudomallei (strain 668), this protein is Leucyl/phenylalanyl-tRNA--protein transferase.